The sequence spans 409 residues: Dual-specificity RNA methyltransferase RlmN (409 aa).

Residue E121 is the Proton acceptor of the active site. The Radical SAM core domain maps to 127–376; sequence EEGRGTLCIS…IRTPRGRDIL (250 aa). C134 and C379 are joined by a disulfide. C141, C145, and C148 together coordinate [4Fe-4S] cluster. S-adenosyl-L-methionine is bound by residues 205 to 206, S237, 259 to 261, and N336; these read GE and SLH. C379 serves as the catalytic S-methylcysteine intermediate.

This sequence belongs to the radical SAM superfamily. RlmN family. [4Fe-4S] cluster serves as cofactor.

Its subcellular location is the cytoplasm. The catalysed reaction is adenosine(2503) in 23S rRNA + 2 reduced [2Fe-2S]-[ferredoxin] + 2 S-adenosyl-L-methionine = 2-methyladenosine(2503) in 23S rRNA + 5'-deoxyadenosine + L-methionine + 2 oxidized [2Fe-2S]-[ferredoxin] + S-adenosyl-L-homocysteine. It carries out the reaction adenosine(37) in tRNA + 2 reduced [2Fe-2S]-[ferredoxin] + 2 S-adenosyl-L-methionine = 2-methyladenosine(37) in tRNA + 5'-deoxyadenosine + L-methionine + 2 oxidized [2Fe-2S]-[ferredoxin] + S-adenosyl-L-homocysteine. Its function is as follows. Specifically methylates position 2 of adenine 2503 in 23S rRNA and position 2 of adenine 37 in tRNAs. m2A2503 modification seems to play a crucial role in the proofreading step occurring at the peptidyl transferase center and thus would serve to optimize ribosomal fidelity. The polypeptide is Dual-specificity RNA methyltransferase RlmN (Rhizobium etli (strain ATCC 51251 / DSM 11541 / JCM 21823 / NBRC 15573 / CFN 42)).